A 181-amino-acid chain; its full sequence is Major urinary protein 20 (181 aa).

An N-terminal signal peptide occupies residues 1 to 19 (MKLLVLLLCLGLTLVCVHA). C83 and C176 are disulfide-bonded.

It belongs to the calycin superfamily. Lipocalin family. Detected in urine of males but absent from female urine (at protein level).

The protein resides in the secreted. Functionally, male pheromone which stimulates female sexual attraction to male urinary scent and promotes a strong learned attraction to the airborne urinary odor of an individual male. Promotes spatial learning by rapidly conditioning preference for its remembered location among females and competitor males so that animals prefer to spend time in the site even when scent is absent. In addition to promoting a rapid attraction response, also elicits ultrasonic vocalizations and urinary scent marking in females which do not occur immediately after exposure. Stimulates hippocampal neurogenesis and cell proliferation in the subventricular zone in females. Promotes male aggressive behavior. Response to Mup20 is mediated by a neural circuit extending from the accessory olfactory bulb to a subset of nitric oxidase synthase-expressing neurons in the medial amygdala. As well as acting as a pheromone itself, binds most of the male pheromone, 2-sec-butyl-4,5-dihydrothiazole, in urine and is responsible for its slow release from scent marks. In Mus musculus (Mouse), this protein is Major urinary protein 20.